Consider the following 1165-residue polypeptide: Immunoglobulin superfamily member 3 (1165 aa).

An N-terminal signal peptide occupies residues 1 to 20 (MGTAAGLLLAALLLAGTSWA). At 21–1095 (QREVNIQQGP…LQSTICANDA (1075 aa)) the chain is on the extracellular side. 8 consecutive Ig-like C2-type domains span residues 22 to 139 (REVN…AKMN), 144 to 262 (PDTL…WFPL), 276 to 386 (PTDK…RGPS), 406 to 527 (PLRT…WQLL), 545 to 661 (FAVT…WTQL), 678 to 800 (PRLQ…EEAS), 810 to 934 (PDAN…WYKR), and 951 to 1067 (PALQ…WYLL). Cystine bridges form between cysteine 43–cysteine 121 and cysteine 168–cysteine 246. The EWI motif motif lies at 250-252 (EWI). 6 disulfide bridges follow: cysteine 302–cysteine 376, cysteine 432–cysteine 511, cysteine 566–cysteine 645, cysteine 701–cysteine 779, cysteine 835–cysteine 918, and cysteine 974–cysteine 1051. Residues 1096–1116 (LFYLVFFYPFPIFGILIITIL) form a helical membrane-spanning segment. Residues 1117–1165 (LVRFRHRPTSKPGEGKNGVPLLWIKEPHLNYSPTCLEPPVLSIHPGTID) lie on the Cytoplasmic side of the membrane.

It is found in the membrane. This chain is Immunoglobulin superfamily member 3 (igsf3), found in Xenopus laevis (African clawed frog).